The following is a 168-amino-acid chain: SPbeta prophage-derived uncharacterized protein YomW (168 aa).

This chain is SPbeta prophage-derived uncharacterized protein YomW (yomW), found in Bacillus subtilis (strain 168).